Consider the following 293-residue polypeptide: 5'-3' exoribonuclease Rnm (293 aa).

His17, His19, Asp24, His49, Glu76, His87, His202, Asp259, and His261 together coordinate Mn(2+).

The protein belongs to the PHP family. TrpH/YciV subfamily. Mn(2+) serves as cofactor.

It carries out the reaction a ribonucleoside 3',5'-bisphosphate + H2O = a ribonucleoside 5'-phosphate + phosphate. Functionally, exoribonuclease that catalyzes the last steps of 5S, 16S and 23S rRNA 5'-end maturation. Removes 3 nucleotides (nt) from the 5' end of 5S, 16S and 23S rRNA precursors to generate the mature 5' ends. 5S and 23S rRNA maturation occurs more efficiently and accurately on ribosomal particles as compared to free RNA. Efficiently catalyzes the hydrolysis of the 3'-phosphate from 3',5'-bis-phosphonucleotides as well as the successive hydrolysis of 5'-phosphomononucleotides from the 5'-end of short pieces of RNA and DNA, with no specificity toward the identity of the nucleotide base. Is more efficient at hydrolyzing RNA oligonucleotides than DNA oligonucleotides. This enzyme can also hydrolyze annealed DNA duplexes, albeit at a catalytic efficiency lower than that of the corresponding single-stranded oligonucleotides. The polypeptide is 5'-3' exoribonuclease Rnm (Salmonella typhimurium (strain LT2 / SGSC1412 / ATCC 700720)).